The sequence spans 503 residues: MEEFKRYLELDRSQQHDFVYPLIFQEYIYALAHDHGLNRSIFLENTGYDNKSSLLIVKRLITQMYQRNHLIFCANDSNQNPFFGHNTNVYSQMLLEGFAVLVEIPFSLRLISSLKGKEIVKSHNLRSIHSIFPFLEDKFSHLNYVLDILIPHSIHLEVLVQTLRYWVKDVSSLHLLRFFLHEYRNWNSLITPKKSSFSFSKRNQRLFLFLYNSHVCEYESIFVFLRNQSSYLRSISSGTFLERIYFYGKIEHFVEVFTKDFKAILWLFKDPFMHYVRYQGKSLLASKGTSLLMNKWKYYLVNFWQCYFYMWSQPGRIHRNQLSNHSLDLLGYLSSVRLNPSIVRSQMLENSFLIGNAIKKFDTIVPIIPLIGSLSKAKFCNVLGHPISKPVWSDLSDSDIIDRFGRIYRNLSHYYSGSSKKMSLYRIKYILRLSXARTLARKHKSTVRAFLKRLGSELLEEFFTEEEQVFSLTFPKASFTSRGLYRRRIWYLDIIXINDLANH.

Belongs to the intron maturase 2 family. MatK subfamily.

It localises to the plastid. It is found in the chloroplast. Usually encoded in the trnK tRNA gene intron. Probably assists in splicing its own and other chloroplast group II introns. The polypeptide is Maturase K (Diospyros kaki (Kaki persimmon)).